A 570-amino-acid polypeptide reads, in one-letter code: Proline--tRNA ligase (570 aa).

It belongs to the class-II aminoacyl-tRNA synthetase family. ProS type 1 subfamily. As to quaternary structure, homodimer.

It localises to the cytoplasm. The enzyme catalyses tRNA(Pro) + L-proline + ATP = L-prolyl-tRNA(Pro) + AMP + diphosphate. In terms of biological role, catalyzes the attachment of proline to tRNA(Pro) in a two-step reaction: proline is first activated by ATP to form Pro-AMP and then transferred to the acceptor end of tRNA(Pro). As ProRS can inadvertently accommodate and process non-cognate amino acids such as alanine and cysteine, to avoid such errors it has two additional distinct editing activities against alanine. One activity is designated as 'pretransfer' editing and involves the tRNA(Pro)-independent hydrolysis of activated Ala-AMP. The other activity is designated 'posttransfer' editing and involves deacylation of mischarged Ala-tRNA(Pro). The misacylated Cys-tRNA(Pro) is not edited by ProRS. The sequence is that of Proline--tRNA ligase from Neisseria meningitidis serogroup B (strain ATCC BAA-335 / MC58).